Here is a 620-residue protein sequence, read N- to C-terminus: uncharacterized protein (620 aa).

4 helical membrane-spanning segments follow: residues 66–86 (LLNFSDFVSGAGIDTVFNQII), 238–258 (FFDALFVMLLLVCHLNKNLLW), 546–566 (LGIISAVVFGIVEFFNCVWTI), and 584–604 (IIFISIGTILVLFLLVTILVF).

It is found in the cell membrane. This is an uncharacterized protein from Mycoplasma genitalium (strain ATCC 33530 / DSM 19775 / NCTC 10195 / G37) (Mycoplasmoides genitalium).